We begin with the raw amino-acid sequence, 73 residues long: UPF0352 protein HSM_0097 (73 aa).

This sequence belongs to the UPF0352 family.

This is UPF0352 protein HSM_0097 from Histophilus somni (strain 2336) (Haemophilus somnus).